A 117-amino-acid polypeptide reads, in one-letter code: Large ribosomal subunit protein bL20c (117 aa).

This sequence belongs to the bacterial ribosomal protein bL20 family.

The protein resides in the plastid. The protein localises to the chloroplast. In terms of biological role, binds directly to 23S ribosomal RNA and is necessary for the in vitro assembly process of the 50S ribosomal subunit. It is not involved in the protein synthesizing functions of that subunit. This chain is Large ribosomal subunit protein bL20c, found in Lobularia maritima (Sweet alyssum).